The following is a 214-amino-acid chain: Probable nicotinate-nucleotide adenylyltransferase (214 aa).

It belongs to the NadD family.

The catalysed reaction is nicotinate beta-D-ribonucleotide + ATP + H(+) = deamido-NAD(+) + diphosphate. The protein operates within cofactor biosynthesis; NAD(+) biosynthesis; deamido-NAD(+) from nicotinate D-ribonucleotide: step 1/1. Catalyzes the reversible adenylation of nicotinate mononucleotide (NaMN) to nicotinic acid adenine dinucleotide (NaAD). This is Probable nicotinate-nucleotide adenylyltransferase from Psychromonas ingrahamii (strain DSM 17664 / CCUG 51855 / 37).